The sequence spans 399 residues: Bombesin receptor subtype-3 (399 aa).

Over 1 to 41 (MAQRQPHSPNQTLISITNDTESSSSVVSNDNTNKGWSGDNS) the chain is Extracellular. Residues asparagine 10 and asparagine 18 are each glycosylated (N-linked (GlcNAc...) asparagine). The chain crosses the membrane as a helical span at residues 42–63 (PGIEALCAIYITYAVIISVGIL). At 64–82 (GNAILIKVFFKTKSMQTVP) the chain is on the cytoplasmic side. Residues 83 to 103 (NIFITSLAFGDLLLLLTCVPV) traverse the membrane as a helical segment. Topologically, residues 104–121 (DATHYLAEGWLFGRIGCK) are extracellular. Cysteines 120 and 203 form a disulfide. A helical transmembrane segment spans residues 122-143 (VLSFIRLTSVGVSVFTLTILSA). Residues 144 to 163 (DRYKAVVKPLERQPSNAILK) are Cytoplasmic-facing. The helical transmembrane segment at 164–184 (TCVKAGCVWIVSMIFALPEAI) threads the bilayer. At 185–220 (FSNVYTFRDPNKNMTFESCTSYPVSKKLLQEIHSLL) the chain is on the extracellular side. The helical transmembrane segment at 221-241 (CFLVFYIIPLSIISVYYSLIA) threads the bilayer. Residues 242–272 (RTLYKSTLNIPTEEQSHARKQIESRKRIART) are Cytoplasmic-facing. Residues 273-293 (VLVLVALFALCWLPNHLLYLY) form a helical membrane-spanning segment. Residues 294–313 (HSFTSQTYVDPSAMHFIFTI) are Extracellular-facing. Residues 314–333 (FSRVLAFSNSCVNPFALYWL) form a helical membrane-spanning segment. Residues 334–399 (SKSFQKHFKA…CSVKQAEDRF (66 aa)) lie on the Cytoplasmic side of the membrane. Residue cysteine 347 is the site of S-palmitoyl cysteine attachment.

This sequence belongs to the G-protein coupled receptor 1 family. As to quaternary structure, interacts with C6orf89. In terms of tissue distribution, in germ cells in testis. Lung carcinoma cells.

Its subcellular location is the cell membrane. Functionally, role in sperm cell division, maturation, or function. This receptor mediates its action by association with G proteins that activate a phosphatidylinositol-calcium second messenger system. This chain is Bombesin receptor subtype-3 (BRS3), found in Homo sapiens (Human).